The sequence spans 908 residues: Protein translocase subunit SecA (908 aa).

ATP-binding positions include Gln-87, 105–109, and Asp-494; that span reads GEGKT. Positions 871–908 are disordered; the sequence is QEFSGGNLNRSQSNGSSVTVTTSSGGGTERKTSRRRKR. Positions 874–884 are enriched in polar residues; sequence SGGNLNRSQSN.

This sequence belongs to the SecA family. In terms of assembly, monomer and homodimer. Part of the essential Sec protein translocation apparatus which comprises SecA, SecYEG and auxiliary proteins SecDF. Other proteins may also be involved.

It is found in the cell inner membrane. The protein localises to the cytoplasm. It carries out the reaction ATP + H2O + cellular proteinSide 1 = ADP + phosphate + cellular proteinSide 2.. Its function is as follows. Part of the Sec protein translocase complex. Interacts with the SecYEG preprotein conducting channel. Has a central role in coupling the hydrolysis of ATP to the transfer of proteins into and across the cell membrane, serving as an ATP-driven molecular motor driving the stepwise translocation of polypeptide chains across the membrane. This Leptospira interrogans serogroup Icterohaemorrhagiae serovar Lai (strain 56601) protein is Protein translocase subunit SecA.